Consider the following 295-residue polypeptide: UDP-N-acetylenolpyruvoylglucosamine reductase (295 aa).

The FAD-binding PCMH-type domain occupies 24-188 (KVGGNAEIFF…LKAVFKVNKG (165 aa)). Arg-168 is a catalytic residue. Catalysis depends on Ser-217, which acts as the Proton donor. Glu-287 is an active-site residue.

The protein belongs to the MurB family. FAD serves as cofactor.

Its subcellular location is the cytoplasm. It carries out the reaction UDP-N-acetyl-alpha-D-muramate + NADP(+) = UDP-N-acetyl-3-O-(1-carboxyvinyl)-alpha-D-glucosamine + NADPH + H(+). It participates in cell wall biogenesis; peptidoglycan biosynthesis. Cell wall formation. The sequence is that of UDP-N-acetylenolpyruvoylglucosamine reductase from Rickettsia felis (strain ATCC VR-1525 / URRWXCal2) (Rickettsia azadi).